A 517-amino-acid chain; its full sequence is Putative thymidine phosphorylase (517 aa).

This sequence belongs to the thymidine/pyrimidine-nucleoside phosphorylase family. Type 2 subfamily.

The catalysed reaction is thymidine + phosphate = 2-deoxy-alpha-D-ribose 1-phosphate + thymine. This Legionella pneumophila (strain Corby) protein is Putative thymidine phosphorylase.